The following is a 388-amino-acid chain: 4-hydroxycoumarin synthase 2 (388 aa).

Residue Cys-159 is part of the active site.

Belongs to the thiolase-like superfamily. Chalcone/stilbene synthases family. Homodimer.

It carries out the reaction 2-hydroxybenzoyl-CoA + malonyl-CoA = 4-hydroxycoumarin + CO2 + 2 CoA. Type III polyketide synthase involved preferentially in the biosynthesis of 4-hydroxycoumarin from salicoyl-CoA. Can also use benzoyl-CoA and malonyl-CoA to produce 3,5-dihydroxybiphenyl as a major product and benzoyldiacetic acid lactone as a minor side product. Can also use m-hydroxybenzoyl-CoA as substrate, producing m-hydroxybenzoyl diacetic acid lactone as a derailment product. No activity with p-hydroxybenzoyl-CoA, CoA-linked cinnamic acids or acetyl-CoA. The polypeptide is 4-hydroxycoumarin synthase 2 (BIS3) (Sorbus aucuparia (European mountain ash)).